The sequence spans 348 residues: Phosphate acyltransferase (348 aa).

Belongs to the PlsX family. In terms of assembly, homodimer. Probably interacts with PlsY.

The protein resides in the cytoplasm. The enzyme catalyses a fatty acyl-[ACP] + phosphate = an acyl phosphate + holo-[ACP]. Its pathway is lipid metabolism; phospholipid metabolism. In terms of biological role, catalyzes the reversible formation of acyl-phosphate (acyl-PO(4)) from acyl-[acyl-carrier-protein] (acyl-ACP). This enzyme utilizes acyl-ACP as fatty acyl donor, but not acyl-CoA. In Rhizobium etli (strain ATCC 51251 / DSM 11541 / JCM 21823 / NBRC 15573 / CFN 42), this protein is Phosphate acyltransferase.